A 180-amino-acid chain; its full sequence is Large ribosomal subunit protein uL5 (180 aa).

This sequence belongs to the universal ribosomal protein uL5 family. As to quaternary structure, part of the 50S ribosomal subunit; part of the 5S rRNA/L5/L18/L25 subcomplex. Contacts the 5S rRNA and the P site tRNA. Forms a bridge to the 30S subunit in the 70S ribosome.

This is one of the proteins that bind and probably mediate the attachment of the 5S RNA into the large ribosomal subunit, where it forms part of the central protuberance. In the 70S ribosome it contacts protein S13 of the 30S subunit (bridge B1b), connecting the 2 subunits; this bridge is implicated in subunit movement. Contacts the P site tRNA; the 5S rRNA and some of its associated proteins might help stabilize positioning of ribosome-bound tRNAs. The protein is Large ribosomal subunit protein uL5 of Lactobacillus johnsonii (strain CNCM I-12250 / La1 / NCC 533).